Consider the following 132-residue polypeptide: Prefoldin subunit alpha (132 aa).

It belongs to the prefoldin subunit alpha family. In terms of assembly, heterohexamer of two alpha and four beta subunits.

Its subcellular location is the cytoplasm. In terms of biological role, molecular chaperone capable of stabilizing a range of proteins. Seems to fulfill an ATP-independent, HSP70-like function in archaeal de novo protein folding. In Pyrobaculum aerophilum (strain ATCC 51768 / DSM 7523 / JCM 9630 / CIP 104966 / NBRC 100827 / IM2), this protein is Prefoldin subunit alpha (pfdA).